A 245-amino-acid chain; its full sequence is uncharacterized protein (245 aa).

Transmembrane regions (helical) follow at residues 29–51 (LVVLIVSFLSILFSAGYAFRIGM) and 61–83 (TILFYGFVAAAFHFILSLYLMLH).

It is found in the cell membrane. This is an uncharacterized protein from Treponema pallidum (strain Nichols).